The primary structure comprises 70 residues: Envelope small membrane protein (70 aa).

The N-myristoyl glycine; by host moiety is linked to residue Gly2. The endoplasmic reticulum retention signal stretch occupies residues 2-15; it reads GSLWSKISQLFVDA. Topologically, residues 2 to 25 are virion surface; it reads GSLWSKISQLFVDAFTEFLVSVVD. The chain crosses the membrane as a helical span at residues 26–46; the sequence is IVIFLAILFGFTVAGWLLVFL. The Intravirion portion of the chain corresponds to 47–70; the sequence is LRVVCSALLRSRSAIHSPELSKVL.

This sequence belongs to the arteriviridae E protein family. As to quaternary structure, homooligomer. Associates with itself into higher-order structures, including dimers, trimers and tetramers. Associates with the GP2b-GP3-GP4 complex. Post-translationally, myristoylated. In terms of processing, not glycosylated.

The protein localises to the virion membrane. It localises to the host endoplasmic reticulum membrane. It is found in the host Golgi apparatus membrane. The protein resides in the secreted. Minor envelope protein. May function as a viroporin in the virion envelope that facilitates uncoating of the virus in order to release the genomic RNA into the cytoplasm for subsequent replication. This Sus scrofa (Pig) protein is Envelope small membrane protein (GP2b).